Here is a 354-residue protein sequence, read N- to C-terminus: Thiamine thiazole synthase (354 aa).

Substrate-binding positions include Ala83, 104–105 (EA), Gly112, and Val177. Cys210 is subject to 2,3-didehydroalanine (Cys). Residues Asp212, His227, Met305, and 315 to 317 (RMG) each bind substrate.

This sequence belongs to the THI4 family. Homooctamer. Fe cation serves as cofactor. Post-translationally, during the catalytic reaction, a sulfide is transferred from Cys-210 to a reaction intermediate, generating a dehydroalanine residue.

It localises to the cytoplasm. It is found in the nucleus. It catalyses the reaction [ADP-thiazole synthase]-L-cysteine + glycine + NAD(+) = [ADP-thiazole synthase]-dehydroalanine + ADP-5-ethyl-4-methylthiazole-2-carboxylate + nicotinamide + 3 H2O + 2 H(+). Its function is as follows. Involved in biosynthesis of the thiamine precursor thiazole. Catalyzes the conversion of NAD and glycine to adenosine diphosphate 5-(2-hydroxyethyl)-4-methylthiazole-2-carboxylic acid (ADT), an adenylated thiazole intermediate. The reaction includes an iron-dependent sulfide transfer from a conserved cysteine residue of the protein to a thiazole intermediate. The enzyme can only undergo a single turnover, which suggests it is a suicide enzyme. May have additional roles in adaptation to various stress conditions and in DNA damage tolerance. In Candida albicans (strain SC5314 / ATCC MYA-2876) (Yeast), this protein is Thiamine thiazole synthase.